Consider the following 238-residue polypeptide: MRIERVDDTTVKLFITYGDIESRGFKREDLWTNRQRGEEFFWSMMEEINEEEDFVVEGPLWIQVHAFEKGVEVVISKSKNEEMMNMADDNMNNEFDRQLNELLEQSFEDENEESVQGNQQQRRSHASDHSKRARHTNGRLVIVKFEDLESVIDYAHHSNQPTDDFEDLLYMLNNEYYYAIHFDDNVGEEVINDFYSQLLEFTQPSDRSEMYLNDYAKIIMSHNVTAQVRRFFTDTEEI.

The segment at 108–133 (EDENEESVQGNQQQRRSHASDHSKRA) is disordered.

This sequence belongs to the MecA family. In terms of assembly, homodimer.

Enables the recognition and targeting of unfolded and aggregated proteins to the ClpC protease or to other proteins involved in proteolysis. This is Adapter protein MecA from Staphylococcus carnosus (strain TM300).